Consider the following 112-residue polypeptide: Nucleoid-associated protein RER_03900 (112 aa).

This sequence belongs to the YbaB/EbfC family. As to quaternary structure, homodimer.

Its subcellular location is the cytoplasm. The protein localises to the nucleoid. Its function is as follows. Binds to DNA and alters its conformation. May be involved in regulation of gene expression, nucleoid organization and DNA protection. This Rhodococcus erythropolis (strain PR4 / NBRC 100887) protein is Nucleoid-associated protein RER_03900.